Here is a 121-residue protein sequence, read N- to C-terminus: Insulin-like peptide 01 (121 aa).

The first 24 residues, 1–24 (MDSFTRASLITFLILLTLTSLVFS), serve as a signal peptide directing secretion. The propeptide occupies 25–45 (NGCMMRGGCFKTSEDAHRLIM). 3 disulfide bridges follow: Cys-52-Cys-107, Cys-64-Cys-120, and Cys-106-Cys-111. The propeptide at 69–97 (RRRKRDLRRKLGIVMDRKESHKFLRRRKR) is c peptide.

It belongs to the insulin family.

It is found in the secreted. In terms of biological role, insulin decreases blood glucose concentration. May have evolved to activate insulin receptors (INSR) in vertebrates. Molecular docking studies reveals unique interaction with the human insulin receptor. In vivo, insulin-like peptide injection reduces blood glucose levels in two models of zebrafish diabetes (streptozotocin- and glucose-induced). Also shorter swimming distance of zebrafish larvae, an effect which is not observed with human insulin. The protein is Insulin-like peptide 01 of Exaiptasia diaphana (Tropical sea anemone).